The chain runs to 357 residues: (+)-eremophilene synthase (357 aa).

Mg(2+) contacts are provided by aspartate 100 and glutamate 105. The DDXXE motif motif lies at 100–105 (DDDFDE). Residue arginine 198 coordinates substrate. Residues asparagine 244 and serine 248 each coordinate Mg(2+). Lysine 251 is a substrate binding site. Aspartate 252 contributes to the Mg(2+) binding site. 331 to 332 (RY) is a binding site for substrate.

The protein belongs to the terpene synthase family. Requires Mg(2+) as cofactor.

The catalysed reaction is (2E,6E)-farnesyl diphosphate = (+)-eremophilene + diphosphate. Its pathway is secondary metabolite biosynthesis; terpenoid biosynthesis. In terms of biological role, catalyzes the conversion of (2E,6E)-farnesyl diphosphate (FPP) to yield the bicyclic sesquiterpene eremophilene via a 1,10-cyclization, which requires the abstraction of the pyrophosphate from FPP to yield the (E,E)-germacradienyl cation. The only accepted substrate is farnesyl diphosphate (FPP). This is (+)-eremophilene synthase from Gibberella fujikuroi (strain CBS 195.34 / IMI 58289 / NRRL A-6831) (Bakanae and foot rot disease fungus).